The primary structure comprises 124 residues: Small ribosomal subunit protein uS12 (124 aa).

Positions 105–124 are disordered; that stretch reads QGVKNRKQARSRYGAKKEKG. Basic residues predominate over residues 108 to 118; sequence KNRKQARSRYG.

It belongs to the universal ribosomal protein uS12 family. Part of the 30S ribosomal subunit. Contacts proteins S8 and S17. May interact with IF1 in the 30S initiation complex.

With S4 and S5 plays an important role in translational accuracy. Its function is as follows. Interacts with and stabilizes bases of the 16S rRNA that are involved in tRNA selection in the A site and with the mRNA backbone. Located at the interface of the 30S and 50S subunits, it traverses the body of the 30S subunit contacting proteins on the other side and probably holding the rRNA structure together. The combined cluster of proteins S8, S12 and S17 appears to hold together the shoulder and platform of the 30S subunit. The sequence is that of Small ribosomal subunit protein uS12 (rpsL) from Mycobacterium bovis (strain ATCC BAA-935 / AF2122/97).